The primary structure comprises 315 residues: Methionyl-tRNA formyltransferase (315 aa).

107–110 contacts (6S)-5,6,7,8-tetrahydrofolate; it reads SLLP.

It belongs to the Fmt family.

The enzyme catalyses L-methionyl-tRNA(fMet) + (6R)-10-formyltetrahydrofolate = N-formyl-L-methionyl-tRNA(fMet) + (6S)-5,6,7,8-tetrahydrofolate + H(+). Its function is as follows. Attaches a formyl group to the free amino group of methionyl-tRNA(fMet). The formyl group appears to play a dual role in the initiator identity of N-formylmethionyl-tRNA by promoting its recognition by IF2 and preventing the misappropriation of this tRNA by the elongation apparatus. In Borrelia garinii subsp. bavariensis (strain ATCC BAA-2496 / DSM 23469 / PBi) (Borreliella bavariensis), this protein is Methionyl-tRNA formyltransferase.